The primary structure comprises 150 residues: Large ribosomal subunit protein uL13 (150 aa).

Residues proline 129–glutamine 150 are disordered. Positions glutamine 136–glutamine 150 are enriched in polar residues.

The protein belongs to the universal ribosomal protein uL13 family. As to quaternary structure, part of the 50S ribosomal subunit.

This protein is one of the early assembly proteins of the 50S ribosomal subunit, although it is not seen to bind rRNA by itself. It is important during the early stages of 50S assembly. This chain is Large ribosomal subunit protein uL13, found in Prochlorococcus marinus (strain MIT 9303).